Here is a 148-residue protein sequence, read N- to C-terminus: Cytochrome c-type biogenesis protein CcmE (148 aa).

Residues 1 to 7 (MKARNKR) are Cytoplasmic-facing. A helical; Signal-anchor for type II membrane protein membrane pass occupies residues 8–28 (LMLVGGGIALLVAAAALVLSA). Residues 29 to 148 (FQQNLVFFHT…AHKTATTVQQ (120 aa)) lie on the Periplasmic side of the membrane. Positions 123 and 127 each coordinate heme.

This sequence belongs to the CcmE/CycJ family.

It is found in the cell inner membrane. Functionally, heme chaperone required for the biogenesis of c-type cytochromes. Transiently binds heme delivered by CcmC and transfers the heme to apo-cytochromes in a process facilitated by CcmF and CcmH. The protein is Cytochrome c-type biogenesis protein CcmE of Azoarcus sp. (strain BH72).